A 185-amino-acid chain; its full sequence is MYTRKTLETEIAVELRRGGALQVETPIPFLTHMVETLLKYAGLGGSVAARELRRLDDGHHVIEDVAIALGRALDALLGERKGIARFGWAAVPMDDSFALAAVDLGGRPYWAVKAKLPDVSIGGYPLRMFPHFVRTLAAEAKATVHIYARGADPHHKVEAAHKALGLALRQAMAPGESPSTKGVLG.

This sequence belongs to the imidazoleglycerol-phosphate dehydratase family.

The protein resides in the cytoplasm. The enzyme catalyses D-erythro-1-(imidazol-4-yl)glycerol 3-phosphate = 3-(imidazol-4-yl)-2-oxopropyl phosphate + H2O. It participates in amino-acid biosynthesis; L-histidine biosynthesis; L-histidine from 5-phospho-alpha-D-ribose 1-diphosphate: step 6/9. The sequence is that of Imidazoleglycerol-phosphate dehydratase from Pyrobaculum arsenaticum (strain DSM 13514 / JCM 11321 / PZ6).